Consider the following 199-residue polypeptide: Inner membrane-spanning protein YciB (199 aa).

Transmembrane regions (helical) follow at residues 4-24, 36-56, 64-84, 90-110, 135-155, and 162-182; these read FIDF…PRIV, IFSA…TLFL, GQWI…TFQS, WKAP…HFIG, LAWV…AFTF, and FKVF…GVFL.

Belongs to the YciB family.

The protein resides in the cell inner membrane. In terms of biological role, plays a role in cell envelope biogenesis, maintenance of cell envelope integrity and membrane homeostasis. The chain is Inner membrane-spanning protein YciB from Azotobacter vinelandii (strain DJ / ATCC BAA-1303).